A 131-amino-acid chain; its full sequence is Sulfurtransferase TusD (131 aa).

Cysteine 81 acts as the Cysteine persulfide intermediate in catalysis.

It belongs to the DsrE/TusD family. Heterohexamer, formed by a dimer of trimers. The hexameric TusBCD complex contains 2 copies each of TusB, TusC and TusD. The TusBCD complex interacts with TusE.

Its subcellular location is the cytoplasm. Part of a sulfur-relay system required for 2-thiolation of 5-methylaminomethyl-2-thiouridine (mnm(5)s(2)U) at tRNA wobble positions. Accepts sulfur from TusA and transfers it in turn to TusE. This is Sulfurtransferase TusD from Yersinia pseudotuberculosis serotype O:1b (strain IP 31758).